Consider the following 231-residue polypeptide: Urease accessory protein UreE (231 aa).

A disordered region spans residues 185-231 (VASPLDEPHGSGLHIHGIHSHGEGHSHGDHDHDHSHSHGDHDHDHKH). Residues 204 to 231 (SHGEGHSHGDHDHDHSHSHGDHDHDHKH) are compositionally biased toward basic and acidic residues.

It belongs to the UreE family.

The protein resides in the cytoplasm. Involved in urease metallocenter assembly. Binds nickel. Probably functions as a nickel donor during metallocenter assembly. This chain is Urease accessory protein UreE, found in Yersinia pseudotuberculosis serotype O:1b (strain IP 31758).